Reading from the N-terminus, the 427-residue chain is Mitochondrial distribution and morphology protein 12 (427 aa).

The SMP-LTD domain maps to 1–387 (MSFDINWNQL…WPSWICIDMN (387 aa)). The segment covering 81–96 (NDSKDEHLKNHGDGIN) has biased composition (basic and acidic residues). 2 disordered regions span residues 81–168 (NDSK…APPL) and 387–427 (NDDD…EAGE). Acidic residues predominate over residues 106–133 (LDDEDEDDEDDDEDDEDEEEEDEDDYDD). Residues 146 to 161 (LNFNENSTTPSANSFA) are compositionally biased toward polar residues. Residues 387 to 402 (NDDDDEEEEEESEDND) are compositionally biased toward acidic residues. Positions 411–427 (NDGKHGDGRTDETEAGE) are enriched in basic and acidic residues.

This sequence belongs to the MDM12 family. Component of the ER-mitochondria encounter structure (ERMES) or MDM complex, composed of MMM1, MDM10, MDM12 and MDM34. An MMM1 homodimer associates with one molecule of MDM12 on each side in a pairwise head-to-tail manner, and the SMP-LTD domains of MMM1 and MDM12 generate a continuous hydrophobic tunnel for phospholipid trafficking.

The protein localises to the mitochondrion outer membrane. It localises to the endoplasmic reticulum membrane. Its function is as follows. Component of the ERMES/MDM complex, which serves as a molecular tether to connect the endoplasmic reticulum (ER) and mitochondria. Components of this complex are involved in the control of mitochondrial shape and protein biogenesis, and function in nonvesicular lipid trafficking between the ER and mitochondria. MDM12 is required for the interaction of the ER-resident membrane protein MMM1 and the outer mitochondrial membrane-resident beta-barrel protein MDM10. The MDM12-MMM1 subcomplex functions in the major beta-barrel assembly pathway that is responsible for biogenesis of all mitochondrial outer membrane beta-barrel proteins, and acts in a late step after the SAM complex. The MDM10-MDM12-MMM1 subcomplex further acts in the TOM40-specific pathway after the action of the MDM12-MMM1 complex. Essential for establishing and maintaining the structure of mitochondria and maintenance of mtDNA nucleoids. This chain is Mitochondrial distribution and morphology protein 12, found in Candida albicans (strain WO-1) (Yeast).